The following is a 231-amino-acid chain: Phosphatidylserine decarboxylase proenzyme (231 aa).

Catalysis depends on Ser-188, which acts as the Schiff-base intermediate with substrate; via pyruvic acid. Pyruvic acid (Ser); by autocatalysis is present on Ser-188.

It belongs to the phosphatidylserine decarboxylase family. PSD-A subfamily. In terms of assembly, heterodimer of a large membrane-associated beta subunit and a small pyruvoyl-containing alpha subunit. Pyruvate is required as a cofactor. In terms of processing, is synthesized initially as an inactive proenzyme. Formation of the active enzyme involves a self-maturation process in which the active site pyruvoyl group is generated from an internal serine residue via an autocatalytic post-translational modification. Two non-identical subunits are generated from the proenzyme in this reaction, and the pyruvate is formed at the N-terminus of the alpha chain, which is derived from the carboxyl end of the proenzyme. The post-translation cleavage follows an unusual pathway, termed non-hydrolytic serinolysis, in which the side chain hydroxyl group of the serine supplies its oxygen atom to form the C-terminus of the beta chain, while the remainder of the serine residue undergoes an oxidative deamination to produce ammonia and the pyruvoyl prosthetic group on the alpha chain.

Its subcellular location is the cell membrane. It carries out the reaction a 1,2-diacyl-sn-glycero-3-phospho-L-serine + H(+) = a 1,2-diacyl-sn-glycero-3-phosphoethanolamine + CO2. The protein operates within phospholipid metabolism; phosphatidylethanolamine biosynthesis; phosphatidylethanolamine from CDP-diacylglycerol: step 2/2. In terms of biological role, catalyzes the formation of phosphatidylethanolamine (PtdEtn) from phosphatidylserine (PtdSer). The chain is Phosphatidylserine decarboxylase proenzyme from Rickettsia rickettsii (strain Iowa).